The primary structure comprises 496 residues: Glutamate--tRNA ligase (496 aa).

The short motif at 12 to 22 (PSPTGTPHVGL) is the 'HIGH' region element. The 'KMSKS' region motif lies at 256–260 (KLSKR). K259 contributes to the ATP binding site.

It belongs to the class-I aminoacyl-tRNA synthetase family. Glutamate--tRNA ligase type 1 subfamily. In terms of assembly, monomer.

The protein resides in the cytoplasm. It carries out the reaction tRNA(Glu) + L-glutamate + ATP = L-glutamyl-tRNA(Glu) + AMP + diphosphate. Its function is as follows. Catalyzes the attachment of glutamate to tRNA(Glu) in a two-step reaction: glutamate is first activated by ATP to form Glu-AMP and then transferred to the acceptor end of tRNA(Glu). This Mycobacteroides abscessus (strain ATCC 19977 / DSM 44196 / CCUG 20993 / CIP 104536 / JCM 13569 / NCTC 13031 / TMC 1543 / L948) (Mycobacterium abscessus) protein is Glutamate--tRNA ligase.